Reading from the N-terminus, the 483-residue chain is UDP-N-acetylmuramate--L-alanine ligase (483 aa).

An ATP-binding site is contributed by 112 to 118; it reads GTHGKTT.

It belongs to the MurCDEF family.

It is found in the cytoplasm. It catalyses the reaction UDP-N-acetyl-alpha-D-muramate + L-alanine + ATP = UDP-N-acetyl-alpha-D-muramoyl-L-alanine + ADP + phosphate + H(+). It participates in cell wall biogenesis; peptidoglycan biosynthesis. Its function is as follows. Cell wall formation. The protein is UDP-N-acetylmuramate--L-alanine ligase of Ralstonia pickettii (strain 12J).